The primary structure comprises 103 residues: Pro-corazonin (103 aa).

The signal sequence occupies residues 1–19 (MSANVTLLLIFVTLASVTA). The residue at position 20 (Q20) is a Pyrrolidone carboxylic acid. N30 is modified (asparagine amide). A propeptide spanning residues 34–103 (DQGHLRPELK…NLNAMMDAFY (70 aa)) is cleaved from the precursor.

As to expression, expressed in corpora cardiaca (CC), corpora allata (CA), antennal lobe (AL) and gnathal ganglion (GNG) (at protein level). Expression in CC and CA detected in all animals, expression in AL and in GNG in some animals.

It is found in the secreted. Its function is as follows. Cardioactive peptide. Corazonin is probably involved in the physiological regulation of the heart beat. This chain is Pro-corazonin, found in Agrotis ipsilon (Black cutworm moth).